Reading from the N-terminus, the 138-residue chain is Acidic phospholipase A2 beta (138 aa).

The N-terminal stretch at 1–16 is a signal peptide; sequence MRTLWIVAVLLLGVEG. 7 disulfides stabilise this stretch: Cys-42/Cys-131, Cys-44/Cys-60, Cys-59/Cys-111, Cys-65/Cys-138, Cys-66/Cys-104, Cys-73/Cys-97, and Cys-91/Cys-102. 3 residues coordinate Ca(2+): Tyr-43, Gly-45, and Gly-47. His-63 is an active-site residue. Asp-64 provides a ligand contact to Ca(2+). Asp-105 is an active-site residue.

The protein belongs to the phospholipase A2 family. Group II subfamily. D49 sub-subfamily. In terms of assembly, dimer. Requires Ca(2+) as cofactor. In terms of tissue distribution, expressed by the venom gland.

Its subcellular location is the secreted. It catalyses the reaction a 1,2-diacyl-sn-glycero-3-phosphocholine + H2O = a 1-acyl-sn-glycero-3-phosphocholine + a fatty acid + H(+). In terms of biological role, PLA2 catalyzes the calcium-dependent hydrolysis of the 2-acyl groups in 3-sn-phosphoglycerides. The protein is Acidic phospholipase A2 beta of Crotalus adamanteus (Eastern diamondback rattlesnake).